We begin with the raw amino-acid sequence, 418 residues long: Magnesium-chelatase subunit ChlI-2, chloroplastic (418 aa).

The transit peptide at 1–55 (MASLLGRSPSSILTCPRISSPSSTSSMSHLCFGPEKLSGRIQFNPKKNRSRYHVS) directs the protein to the chloroplast. The residue at position 56 (Val-56) is an N-acetylvaline. Intrachain disulfides connect Cys-96–Cys-187 and Cys-348–Cys-390. 113-120 (GDRGTGKS) contributes to the ATP binding site.

Belongs to the Mg-chelatase subunits D/I family. The magnesium chelatase complex is a heterotrimer consisting of subunits CHLI, CHLD and CHLH. Expressed in leaves.

It is found in the plastid. The protein resides in the chloroplast. The catalysed reaction is protoporphyrin IX + Mg(2+) + ATP + H2O = Mg-protoporphyrin IX + ADP + phosphate + 3 H(+). It functions in the pathway porphyrin-containing compound metabolism; chlorophyll biosynthesis. With respect to regulation, redox regulation; active in reducing conditions, inactive in oxidizing conditions. Thioredoxins f and m mediate the reversible reductive activation of oxidized CHLI2. Functionally, involved in chlorophyll biosynthesis. Catalyzes the insertion of magnesium ion into protoporphyrin IX to yield Mg-protoporphyrin IX. The reaction takes place in two steps, with an ATP-dependent activation followed by an ATP-dependent chelation step. Possesses low affinity for ATP and may play a limited role in chlorophyll biosynthesis, and contributes to the assembly of the Mg-chelatase complex. The protein is Magnesium-chelatase subunit ChlI-2, chloroplastic (CHLI2) of Arabidopsis thaliana (Mouse-ear cress).